The sequence spans 244 residues: tRNA (guanine-N(7)-)-methyltransferase (244 aa).

The disordered stretch occupies residues 1–24; sequence MTDSHVPHPESPAVEEGEERPHRR. 4 residues coordinate S-adenosyl-L-methionine: Glu-74, Glu-99, Asp-126, and Asp-149. Residue Asp-149 is part of the active site. Substrate contacts are provided by residues Lys-153, Asp-185, and 222–225; that span reads TKFE.

This sequence belongs to the class I-like SAM-binding methyltransferase superfamily. TrmB family.

It catalyses the reaction guanosine(46) in tRNA + S-adenosyl-L-methionine = N(7)-methylguanosine(46) in tRNA + S-adenosyl-L-homocysteine. It participates in tRNA modification; N(7)-methylguanine-tRNA biosynthesis. Catalyzes the formation of N(7)-methylguanine at position 46 (m7G46) in tRNA. In Pseudomonas savastanoi pv. phaseolicola (strain 1448A / Race 6) (Pseudomonas syringae pv. phaseolicola (strain 1448A / Race 6)), this protein is tRNA (guanine-N(7)-)-methyltransferase.